The chain runs to 463 residues: Putative glycine--tRNA ligase, cytoplasmic (463 aa).

The interval 25-54 (TLEDSHAAKPETNAAIELPNKSKPEKSAVE) is disordered. Positions 44–54 (NKSKPEKSAVE) are enriched in basic and acidic residues. R153 and E239 together coordinate substrate. ATP-binding positions include 271-273 (RNE) and 281-286 (LRTREF). Substrate contacts are provided by residues 286-290 (FTLAE) and N376. ATP is bound at residue 398 to 399 (EC).

This sequence belongs to the class-II aminoacyl-tRNA synthetase family. As to quaternary structure, homodimer.

It localises to the cytoplasm. It carries out the reaction tRNA(Gly) + glycine + ATP = glycyl-tRNA(Gly) + AMP + diphosphate. Catalyzes the attachment of glycine to tRNA(Gly). Is also able produce diadenosine tetraphosphate (Ap4A), a universal pleiotropic signaling molecule needed for cell regulation pathways, by direct condensation of 2 ATPs. In Arabidopsis thaliana (Mouse-ear cress), this protein is Putative glycine--tRNA ligase, cytoplasmic.